A 345-amino-acid chain; its full sequence is KRR1 small subunit processome component homolog (345 aa).

Positions 125–193 (DIIKIGNLVH…VRDIVLETMN (69 aa)) constitute a KH domain. Basic residues predominate over residues 232–245 (NISKRKQPKVKKQK). Disordered regions lie at residues 232-260 (NISK…ESKV) and 273-345 (QEQK…ARSS). The stretch at 270 to 298 (FLNQEQKQAKRNQERTEKQKEAAKRQDER) forms a coiled coil. 2 stretches are compositionally biased toward basic and acidic residues: residues 276–302 (KQAK…RNKD) and 315–330 (RKKE…DVKA). Residues 331–345 (LKAKLIKANKKARSS) show a composition bias toward basic residues.

Belongs to the KRR1 family. As to quaternary structure, monomer. Component of the ribosomal small subunit (SSU) processome.

Its subcellular location is the nucleus. It is found in the nucleolus. Required for 40S ribosome biogenesis. Involved in nucleolar processing of pre-18S ribosomal RNA and ribosome assembly. Binds to RNA. Required for female germline development, cell viability during eye development and for survival of dividing cells and epithelial cells during early wing disk development. This Drosophila melanogaster (Fruit fly) protein is KRR1 small subunit processome component homolog (dbe).